We begin with the raw amino-acid sequence, 376 residues long: Na(+)/H(+) antiporter NhaA (376 aa).

The next 11 helical transmembrane spans lie at 8–28 (FLATEAAGGIILIAAAAAAML), 49–69 (LSLLHWINDALMALFFLLVGL), 87–107 (ILPCIAAAAGMAAPALLYLAF), 117–137 (GWAIPTATDIAFAIGVLALLG), 140–160 (APASLKLFLTTIAIVDDMGAV), 162–182 (IIALAYTAAISGPALLAAIVI), 209–229 (LAVLLSGVHATIAGVLAALAI), 248–268 (PWVAFAIVPLFGFANAGVSFA), 270–290 (IGAEQLLAPLPLGIAAGLFLG), 321–341 (GVALLCGIGFTMSLFIGGLAF), and 349–369 (EVKIGVLGGSILSAIAGYALL).

This sequence belongs to the NhaA Na(+)/H(+) (TC 2.A.33) antiporter family.

The protein resides in the cell inner membrane. It carries out the reaction Na(+)(in) + 2 H(+)(out) = Na(+)(out) + 2 H(+)(in). Functionally, na(+)/H(+) antiporter that extrudes sodium in exchange for external protons. The polypeptide is Na(+)/H(+) antiporter NhaA (Rhizorhabdus wittichii (strain DSM 6014 / CCUG 31198 / JCM 15750 / NBRC 105917 / EY 4224 / RW1) (Sphingomonas wittichii)).